A 401-amino-acid polypeptide reads, in one-letter code: 1-deoxy-D-xylulose 5-phosphate reductoisomerase (401 aa).

7 residues coordinate NADPH: T11, G12, S13, I14, R38, N39, and N125. 1-deoxy-D-xylulose 5-phosphate is bound at residue K126. E127 serves as a coordination point for NADPH. D151 provides a ligand contact to Mn(2+). The 1-deoxy-D-xylulose 5-phosphate site is built by S152, E153, S179, and H202. E153 is a binding site for Mn(2+). Residue G208 participates in NADPH binding. The 1-deoxy-D-xylulose 5-phosphate site is built by S215, N220, K221, and E224. A Mn(2+)-binding site is contributed by E224.

Belongs to the DXR family. Mg(2+) serves as cofactor. The cofactor is Mn(2+).

It carries out the reaction 2-C-methyl-D-erythritol 4-phosphate + NADP(+) = 1-deoxy-D-xylulose 5-phosphate + NADPH + H(+). It participates in isoprenoid biosynthesis; isopentenyl diphosphate biosynthesis via DXP pathway; isopentenyl diphosphate from 1-deoxy-D-xylulose 5-phosphate: step 1/6. Its function is as follows. Catalyzes the NADPH-dependent rearrangement and reduction of 1-deoxy-D-xylulose-5-phosphate (DXP) to 2-C-methyl-D-erythritol 4-phosphate (MEP). The polypeptide is 1-deoxy-D-xylulose 5-phosphate reductoisomerase (Paraburkholderia phymatum (strain DSM 17167 / CIP 108236 / LMG 21445 / STM815) (Burkholderia phymatum)).